The chain runs to 74 residues: Small, acid-soluble spore protein Tlp (74 aa).

The interval 38 to 74 (AEELSSKEKDELSSKNERRKESVDGLRSEIKDEADSQ) is disordered.

Belongs to the Tlp family.

The protein resides in the spore core. This is Small, acid-soluble spore protein Tlp from Oceanobacillus iheyensis (strain DSM 14371 / CIP 107618 / JCM 11309 / KCTC 3954 / HTE831).